We begin with the raw amino-acid sequence, 166 residues long: Myosin regulatory light chain 2, ventricular/cardiac muscle isoform (166 aa).

S2 is modified (n,N,N-trimethylserine). A phosphoserine mark is found at S14, S15, and S19. EF-hand domains follow at residues 24–59 (TQIQ…LGRV), 94–129 (DPEE…QAER), and 130–165 (FSKE…GEEK). 4 residues coordinate Ca(2+): D37, N39, D41, and D48. Residue T52 is modified to Phosphothreonine.

In terms of assembly, myosin is a hexamer of 2 heavy chains and 4 light chains. Interacts with MYOC. Post-translationally, N-terminus is methylated by METTL11A/NTM1. Phosphorylated by MYLK3 and MYLK2; promotes cardiac muscle contraction and function. Dephosphorylated by PPP1CB complexed to PPP1R12B. The phosphorylated form in adult is expressed as gradients across the heart from endocardium (low phosphorylation) to epicardium (high phosphorylation); regulates cardiac torsion and workload distribution. Abundantly expressed in both cardiac and slow skeletal muscle (soleus), with no detectable expression in fast skeletal muscle (vastus lateralis) or non-muscle tissue.

It localises to the cytoplasm. The protein resides in the myofibril. It is found in the sarcomere. The protein localises to the a band. In terms of biological role, contractile protein that plays a role in heart development and function. Following phosphorylation, plays a role in cross-bridge cycling kinetics and cardiac muscle contraction by increasing myosin lever arm stiffness and promoting myosin head diffusion; as a consequence of the increase in maximum contraction force and calcium sensitivity of contraction force. These events altogether slow down myosin kinetics and prolong duty cycle resulting in accumulated myosins being cooperatively recruited to actin binding sites to sustain thin filament activation as a means to fine-tune myofilament calcium sensitivity to force. During cardiogenesis plays an early role in cardiac contractility by promoting cardiac myofibril assembly. This chain is Myosin regulatory light chain 2, ventricular/cardiac muscle isoform, found in Rattus norvegicus (Rat).